The sequence spans 704 residues: Polyribonucleotide nucleotidyltransferase (704 aa).

Mg(2+)-binding residues include Asp486 and Asp492. The KH domain occupies 553-612 (PRIYTMKINPEKIKDVIGKGGSVIRALTDETGTTIEIEDDGTIKIAATDGDKAKHAIRRI). One can recognise an S1 motif domain in the interval 622-690 (GRIYAGKVTR…RQGRIRLSIK (69 aa)).

This sequence belongs to the polyribonucleotide nucleotidyltransferase family. In terms of assembly, component of the RNA degradosome, which is a multiprotein complex involved in RNA processing and mRNA degradation. It depends on Mg(2+) as a cofactor.

It localises to the cytoplasm. It carries out the reaction RNA(n+1) + phosphate = RNA(n) + a ribonucleoside 5'-diphosphate. In terms of biological role, involved in mRNA degradation. Catalyzes the phosphorolysis of single-stranded polyribonucleotides processively in the 3'- to 5'-direction. This is Polyribonucleotide nucleotidyltransferase from Yersinia pseudotuberculosis serotype IB (strain PB1/+).